A 466-amino-acid polypeptide reads, in one-letter code: Adenosylhomocysteinase (466 aa).

Residues threonine 57, aspartate 132, and glutamate 192 each coordinate substrate. Residue threonine 193–threonine 195 coordinates NAD(+). Residues lysine 222 and aspartate 226 each contribute to the substrate site. NAD(+) is bound by residues asparagine 227, glycine 256 to glycine 261, glutamate 279, asparagine 314, isoleucine 335 to histidine 337, and asparagine 380.

The protein belongs to the adenosylhomocysteinase family. NAD(+) is required as a cofactor.

The protein localises to the cytoplasm. It catalyses the reaction S-adenosyl-L-homocysteine + H2O = L-homocysteine + adenosine. The protein operates within amino-acid biosynthesis; L-homocysteine biosynthesis; L-homocysteine from S-adenosyl-L-homocysteine: step 1/1. May play a key role in the regulation of the intracellular concentration of adenosylhomocysteine. This Rhizobium rhizogenes (strain K84 / ATCC BAA-868) (Agrobacterium radiobacter) protein is Adenosylhomocysteinase.